A 202-amino-acid polypeptide reads, in one-letter code: Adenylyl-sulfate kinase (202 aa).

35 to 42 is a binding site for ATP; sequence GLSGSGKS. Ser-109 serves as the catalytic Phosphoserine intermediate.

Belongs to the APS kinase family.

The enzyme catalyses adenosine 5'-phosphosulfate + ATP = 3'-phosphoadenylyl sulfate + ADP + H(+). It functions in the pathway sulfur metabolism; hydrogen sulfide biosynthesis; sulfite from sulfate: step 2/3. Its function is as follows. Catalyzes the synthesis of activated sulfate. The protein is Adenylyl-sulfate kinase of Bacteroides fragilis (strain YCH46).